The primary structure comprises 290 residues: 4-hydroxybenzoate octaprenyltransferase (290 aa).

8 consecutive transmembrane segments (helical) span residues 21-41 (IGTM…ADGM), 44-64 (LRVL…GCII), 97-117 (LFVV…PLVV), 143-163 (FLGV…TGEV), 168-188 (WWLF…YAMV), 211-231 (EIIG…GWSG), 235-255 (LLYG…QRLI), and 270-290 (NNWA…FAAL).

This sequence belongs to the UbiA prenyltransferase family. Mg(2+) serves as cofactor.

The protein localises to the cell inner membrane. It catalyses the reaction all-trans-octaprenyl diphosphate + 4-hydroxybenzoate = 4-hydroxy-3-(all-trans-octaprenyl)benzoate + diphosphate. It functions in the pathway cofactor biosynthesis; ubiquinone biosynthesis. Functionally, catalyzes the prenylation of para-hydroxybenzoate (PHB) with an all-trans polyprenyl group. Mediates the second step in the final reaction sequence of ubiquinone-8 (UQ-8) biosynthesis, which is the condensation of the polyisoprenoid side chain with PHB, generating the first membrane-bound Q intermediate 3-octaprenyl-4-hydroxybenzoate. The protein is 4-hydroxybenzoate octaprenyltransferase of Shewanella amazonensis (strain ATCC BAA-1098 / SB2B).